The primary structure comprises 298 residues: Glycine--tRNA ligase alpha subunit (298 aa).

This sequence belongs to the class-II aminoacyl-tRNA synthetase family. Tetramer of two alpha and two beta subunits.

It is found in the cytoplasm. It catalyses the reaction tRNA(Gly) + glycine + ATP = glycyl-tRNA(Gly) + AMP + diphosphate. The sequence is that of Glycine--tRNA ligase alpha subunit from Lacticaseibacillus paracasei (strain ATCC 334 / BCRC 17002 / CCUG 31169 / CIP 107868 / KCTC 3260 / NRRL B-441) (Lactobacillus paracasei).